We begin with the raw amino-acid sequence, 321 residues long: Probable protein phosphatase methylesterase 1 (321 aa).

Residues Ser170, Asp195, and His307 contribute to the active site.

This sequence belongs to the AB hydrolase superfamily.

It catalyses the reaction [phosphatase 2A protein]-C-terminal L-leucine methyl ester + H2O = [phosphatase 2A protein]-C-terminal L-leucine + methanol + H(+). Its function is as follows. Demethylates proteins that have been reversibly carboxymethylated. In Dictyostelium discoideum (Social amoeba), this protein is Probable protein phosphatase methylesterase 1 (ppme1).